The following is a 463-amino-acid chain: L-seryl-tRNA(Sec) selenium transferase (463 aa).

K295 bears the N6-(pyridoxal phosphate)lysine mark.

Belongs to the SelA family. As to quaternary structure, homodecamer; pentamer of dimers. Binds only one seryl-tRNA(Sec) per dimer. Requires pyridoxal 5'-phosphate as cofactor.

It is found in the cytoplasm. It catalyses the reaction L-seryl-tRNA(Sec) + selenophosphate + H(+) = L-selenocysteinyl-tRNA(Sec) + phosphate. It participates in aminoacyl-tRNA biosynthesis; selenocysteinyl-tRNA(Sec) biosynthesis; selenocysteinyl-tRNA(Sec) from L-seryl-tRNA(Sec) (bacterial route): step 1/1. Its function is as follows. Converts seryl-tRNA(Sec) to selenocysteinyl-tRNA(Sec) required for selenoprotein biosynthesis. The protein is L-seryl-tRNA(Sec) selenium transferase of Salmonella dublin (strain CT_02021853).